Here is a 541-residue protein sequence, read N- to C-terminus: Chaperonin GroEL 2 (541 aa).

ATP-binding positions include 29-32 (TLGP), 86-90 (DGTTT), Gly-413, 476-478 (NAA), and Asp-492.

It belongs to the chaperonin (HSP60) family. In terms of assembly, forms a cylinder of 14 subunits composed of two heptameric rings stacked back-to-back. Interacts with the co-chaperonin GroES.

The protein localises to the cytoplasm. The enzyme catalyses ATP + H2O + a folded polypeptide = ADP + phosphate + an unfolded polypeptide.. Together with its co-chaperonin GroES, plays an essential role in assisting protein folding. The GroEL-GroES system forms a nano-cage that allows encapsulation of the non-native substrate proteins and provides a physical environment optimized to promote and accelerate protein folding. This Streptomyces coelicolor (strain ATCC BAA-471 / A3(2) / M145) protein is Chaperonin GroEL 2.